The primary structure comprises 1225 residues: Hyphally regulated cell wall protein 4 (1225 aa).

A signal peptide spans 1–20; sequence MFSYSQAIRFIIFLLPICLT. N-linked (GlcNAc...) asparagine glycosylation is found at N97, N200, N488, N595, N634, and N694. The segment at 832–852 is disordered; it reads DLDLPDDTTFTPSQSSSTTVP. The span at 838 to 852 shows a compositional bias: low complexity; the sequence is DTTFTPSQSSSTTVP. N-linked (GlcNAc...) asparagine glycosylation is found at N933 and N1035. The disordered stretch occupies residues 1049-1114; sequence AYTQQDASTQ…NSHFEGTFIS (66 aa). N1133, N1150, N1182, and N1193 each carry an N-linked (GlcNAc...) asparagine glycan. Residue S1195 is the site of GPI-anchor amidated serine attachment. Residues 1196–1225 constitute a propeptide, removed in mature form; the sequence is GLISKSESVVLLIRPVMIFVFLAICVVIML.

This sequence belongs to the HYR1/IFF family. In terms of processing, the GPI-anchor is attached to the protein in the endoplasmic reticulum and serves to target the protein to the cell surface. There, the glucosamine-inositol phospholipid moiety is cleaved off and the GPI-modified mannoprotein is covalently attached via its lipidless GPI glycan remnant to the 1,6-beta-glucan of the outer cell wall layer.

The protein localises to the secreted. Its subcellular location is the cell wall. It localises to the membrane. Functionally, GPI-anchored cell wall protein involved in cell wall organization, hyphal growth, as well as in host-fungal interaction and virulence. This is Hyphally regulated cell wall protein 4 (HYR4) from Candida albicans (strain SC5314 / ATCC MYA-2876) (Yeast).